A 331-amino-acid chain; its full sequence is Pyruvate synthase subunit PorB (331 aa).

The [4Fe-4S] cluster site is built by Cys21, Cys24, Cys59, and Cys222.

Heterotetramer of one alpha, one beta, one delta and one gamma chain. Requires [4Fe-4S] cluster as cofactor.

It carries out the reaction 2 oxidized [2Fe-2S]-[ferredoxin] + pyruvate + CoA = 2 reduced [2Fe-2S]-[ferredoxin] + acetyl-CoA + CO2 + H(+). The sequence is that of Pyruvate synthase subunit PorB (porB) from Pyrococcus furiosus (strain ATCC 43587 / DSM 3638 / JCM 8422 / Vc1).